A 117-amino-acid chain; its full sequence is Structural toxin peptide sea anemone type 9a (117 aa).

The signal sequence occupies residues 1-23; that stretch reads MKTIIAIFSLAAMIVLVRPTPLE. A run of 3 repeats spans residues 28-56, 57-88, and 89-117. The tract at residues 29–117 is 3 X approximate tandem repeats; it reads RSIINVPCKK…GKCRKIHGCS (89 aa).

In terms of processing, contains 6 disulfide bonds. As to expression, expressed outside of acontia.

It localises to the secreted. The protein localises to the nematocyst. In terms of biological role, putative neurotoxin. This Calliactis polypus (Hermit crab anemone) protein is Structural toxin peptide sea anemone type 9a.